Here is a 224-residue protein sequence, read N- to C-terminus: uncharacterized protein (224 aa).

Residues 1 to 19 (MLRHITFTVFITTSMNTLA) form the signal peptide.

This sequence belongs to the periplasmic pilus chaperone family.

It localises to the periplasm. Its function is as follows. Could be required for the biogenesis of a putative fimbria. This is an uncharacterized protein from Escherichia coli (strain K12).